The chain runs to 252 residues: 2-succinyl-6-hydroxy-2,4-cyclohexadiene-1-carboxylate synthase (252 aa).

This sequence belongs to the AB hydrolase superfamily. MenH family. In terms of assembly, monomer.

The catalysed reaction is 5-enolpyruvoyl-6-hydroxy-2-succinyl-cyclohex-3-ene-1-carboxylate = (1R,6R)-6-hydroxy-2-succinyl-cyclohexa-2,4-diene-1-carboxylate + pyruvate. Its pathway is quinol/quinone metabolism; 1,4-dihydroxy-2-naphthoate biosynthesis; 1,4-dihydroxy-2-naphthoate from chorismate: step 3/7. It functions in the pathway quinol/quinone metabolism; menaquinone biosynthesis. Catalyzes a proton abstraction reaction that results in 2,5-elimination of pyruvate from 2-succinyl-5-enolpyruvyl-6-hydroxy-3-cyclohexene-1-carboxylate (SEPHCHC) and the formation of 2-succinyl-6-hydroxy-2,4-cyclohexadiene-1-carboxylate (SHCHC). This chain is 2-succinyl-6-hydroxy-2,4-cyclohexadiene-1-carboxylate synthase, found in Salmonella choleraesuis (strain SC-B67).